The following is a 347-amino-acid chain: Heat-inducible transcription repressor HrcA (347 aa).

This sequence belongs to the HrcA family.

In terms of biological role, negative regulator of class I heat shock genes (grpE-dnaK-dnaJ and groELS operons). Prevents heat-shock induction of these operons. In Laribacter hongkongensis (strain HLHK9), this protein is Heat-inducible transcription repressor HrcA.